The chain runs to 517 residues: Pseudaminic acid cytidylyltransferase and UDP-2,4-diacetamido-2,4,6-trideoxy-beta-L-altropyranose hydrolase (517 aa).

A pseudaminic acid cytidylyltransferase region spans residues Met1 to Ile208. The segment at Ala209–Ile517 is UDP-2,4-diacetamido-2,4,6-trideoxy-beta-L-altropyranose hydrolase. His244 (proton acceptor; for UDP-2,4-diacetamido-2,4,6-trideoxy-beta-L-altropyranose hydrolase activity) is an active-site residue.

This sequence in the N-terminal section; belongs to the CMP-NeuNAc synthase family. The protein in the C-terminal section; belongs to the PseG family. In terms of assembly, monomer. The cofactor is Mg(2+).

The catalysed reaction is UDP-2,4-diacetamido-2,4,6-trideoxy-beta-L-altrose + H2O = 2,4-diacetamido-2,4,6-trideoxy-beta-L-altrose + UDP + H(+). It carries out the reaction pseudaminate + CTP = CMP-pseudaminate + diphosphate. In terms of biological role, catalyzes the fourth and sixth steps in the biosynthesis of pseudaminic acid, a sialic-acid-like sugar that is used to modify flagellin. The C-terminus mediates the fourth step of the pathway and catalyzes the removal of UDP from C-1 of UDP-2,4-diacetamido-2,4,6-trideoxy-beta-L-altropyranose forming 2,4-diacetamido-2,4,6-trideoxy-beta-L-altropyranose. The N-terminal part mediates the last step of the pathway by mediating activation of pseudaminic acid with CMP by forming CMP-pseudaminic acid. The protein is Pseudaminic acid cytidylyltransferase and UDP-2,4-diacetamido-2,4,6-trideoxy-beta-L-altropyranose hydrolase of Helicobacter pylori (strain ATCC 700392 / 26695) (Campylobacter pylori).